Consider the following 256-residue polypeptide: MQRTKEAMKASDGSLLGDPGRIPLSKREGIKWQRPRFTRQALMRCCLIKWILSSAAPQGSDSSDSELELSTVRHQPEGLDQLQAQTKFTKKELQSLYRGFKNECPTGLVDEDTFKLIYSQFFPQGDATTYAHFLFNAFDADGNGAIHFEDFVVGLSILLRGTVHEKLKWAFNLYDINKDGYITKEEMLAIMKSIYDMMGRHTYPILREDAPLEHVERFFQKMDRNQDGVVTIDEFLETCQKDENIMSSMQLFENVI.

Residues 1-22 (MQRTKEAMKASDGSLLGDPGRI) are disordered. Ser-14 carries the phosphoserine modification. A Glycyl lysine isopeptide (Lys-Gly) (interchain with G-Cter in SUMO1) cross-link involves residue Lys-26. S-palmitoyl cysteine attachment occurs at residues Cys-45 and Cys-46. Phosphoserine occurs at positions 60 and 63. The 57-residue stretch at 67-123 (LELSTVRHQPEGLDQLQAQTKFTKKELQSLYRGFKNECPTGLVDEDTFKLIYSQFFP) folds into the EF-hand 1; degenerate domain. Residue Lys-90 forms a Glycyl lysine isopeptide (Lys-Gly) (interchain with G-Cter in SUMO1) linkage. 3 consecutive EF-hand domains span residues 126–161 (DATT…LLRG), 162–197 (TVHE…IYDM), and 210–245 (APLE…DENI). Residues Asp-175, Asn-177, Asp-179, Tyr-181, Glu-186, Asp-223, Asn-225, Asp-227, and Glu-234 each coordinate Ca(2+). Residues 243 to 256 (ENIMSSMQLFENVI) form an interaction with KCND2 region.

The protein belongs to the recoverin family. In terms of assembly, binds to DNA as a homomultimer. Dimerization is induced by binding to calcium. Interacts with the C-terminus of PSEN1 and PSEN2 and with PSEN2 CTF subunit. Associates with KCN1. Component of heteromultimeric potassium channels. Identified in potassium channel complexes containing KCND1, KCND2, KCND3, KCNIP1, KCNIP2, KCNIP3, KCNIP4, DPP6 and DPP10. Interacts with KCND2 and KCND3. In terms of processing, palmitoylated. Palmitoylation enhances association with the plasma membrane. Proteolytically cleaved by caspase-3. Detected in brain cortex, thalamus, dentate gyrus and cerebellum (at protein level). Expressed in brain. Colocalizes with KCND2 in excitatory neurons including cortical and hippocampal CA1 pyramidal cells.

Its subcellular location is the cytoplasm. It is found in the cell membrane. The protein resides in the endoplasmic reticulum. The protein localises to the golgi apparatus. It localises to the nucleus. Calcium-dependent transcriptional repressor that binds to the DRE element of genes including PDYN and FOS. Affinity for DNA is reduced upon binding to calcium and enhanced by binding to magnesium. Seems to be involved in nociception. Its function is as follows. Regulatory subunit of Kv4/D (Shal)-type voltage-gated rapidly inactivating A-type potassium channels, such as KCND2/Kv4.2 and KCND3/Kv4.3. Modulates channel expression at the cell membrane, gating characteristics, inactivation kinetics and rate of recovery from inactivation in a calcium-dependent and isoform-specific manner. In terms of biological role, may play a role in the regulation of PSEN2 proteolytic processing and apoptosis. Together with PSEN2 involved in modulation of amyloid-beta formation. The polypeptide is Calsenilin (Kcnip3) (Rattus norvegicus (Rat)).